We begin with the raw amino-acid sequence, 328 residues long: Serine/threonine-protein phosphatase PP2A-2 catalytic subunit (328 aa).

Mn(2+) is bound by residues D76, H78, D104, and N136. Residue H137 is the Proton donor of the active site. Residues H186 and H260 each coordinate Mn(2+). L328 is subject to Leucine methyl ester.

It belongs to the PPP phosphatase family. PP-2A subfamily. Requires Mn(2+) as cofactor.

It catalyses the reaction O-phospho-L-seryl-[protein] + H2O = L-seryl-[protein] + phosphate. The catalysed reaction is O-phospho-L-threonyl-[protein] + H2O = L-threonyl-[protein] + phosphate. This chain is Serine/threonine-protein phosphatase PP2A-2 catalytic subunit (PP2A-2), found in Blumeria hordei (Barley powdery mildew).